The primary structure comprises 4114 residues: Ferrichrome siderophore peptide synthetase (4114 aa).

Carrier domains follow at residues 797–874 (DPAT…QSSG), 1947–2021 (TDSE…IDKL), 3020–3093 (TQSE…MQSS), and 3574–3650 (QALS…SQTN). Residues serine 835, serine 1982, serine 3054, and serine 3611 each carry the O-(pantetheine 4'-phosphoryl)serine modification. Positions 4040–4061 (LDYSHHSQHSTHDRTPPSTPHV) are disordered. A compositionally biased stretch (basic and acidic residues) spans 4041-4054 (DYSHHSQHSTHDRT).

The protein belongs to the ATP-dependent AMP-binding enzyme family. Pantetheine 4'-phosphate is required as a cofactor.

The protein operates within siderophore biosynthesis; ferrichrome biosynthesis. Functionally, multidomain peptide synthetase involved in ferrichrome biosynthesis. The sequence is that of Ferrichrome siderophore peptide synthetase (SID2) from Mycosarcoma maydis (Corn smut fungus).